Reading from the N-terminus, the 212-residue chain is MVRWSVSAELSRAVAAMGIRDPAVLRAIAEVPRDLFVPPRLRHQAGADQALPIGFGQTISQPFVVAFMTERLHLTGLERVLEVGTGSGYQTAILARLAAEVFSIEIVPELAARARAALLETLHLRNVRLRTGDGAAGWPEAAPFDRVLVTAAAPEVPPALTAQLAPGGRMVVPVGAAPGLQVLRAVDKGNDGVDLSTDLIPVRFVPLTGASG.

The active site involves serine 60.

It belongs to the methyltransferase superfamily. L-isoaspartyl/D-aspartyl protein methyltransferase family.

It is found in the cytoplasm. It catalyses the reaction [protein]-L-isoaspartate + S-adenosyl-L-methionine = [protein]-L-isoaspartate alpha-methyl ester + S-adenosyl-L-homocysteine. In terms of biological role, catalyzes the methyl esterification of L-isoaspartyl residues in peptides and proteins that result from spontaneous decomposition of normal L-aspartyl and L-asparaginyl residues. It plays a role in the repair and/or degradation of damaged proteins. In Anaeromyxobacter sp. (strain Fw109-5), this protein is Protein-L-isoaspartate O-methyltransferase 1.